The following is a 50-amino-acid chain: Small ribosomal subunit protein uS14 (50 aa).

Positions 15, 18, 33, and 36 each coordinate Zn(2+).

Belongs to the universal ribosomal protein uS14 family. Zinc-binding uS14 subfamily. Part of the 30S ribosomal subunit. Zn(2+) is required as a cofactor.

Functionally, binds 16S rRNA, required for the assembly of 30S particles. This Methanosarcina barkeri (strain Fusaro / DSM 804) protein is Small ribosomal subunit protein uS14.